Reading from the N-terminus, the 552-residue chain is Putative transport protein YPTS_4123 (552 aa).

The next 6 helical transmembrane spans lie at 1–21 (MSAIALTVSMLALVAVLGLWI), 26–46 (IYGVGLGIGGVLFGGIIVGHF), 65–85 (FGLILFVYTIGIQVGPGFFSS), 96–116 (FAILMVVVGGLVTAIIHKLFA), 119–139 (LPIILGVFSGAVTNTPALGAA), and 158–178 (MGYAMAYPFGICGILLVMWLI). RCK C-terminal domains lie at 192–276 (AFDS…VVGE) and 279–361 (DVTL…IVGN). 6 helical membrane passes run 371-391 (MLPVFIGVGLGVLLGSIPLFV), 393-413 (GFPAALRLGLAGGPLVVALIL), 439-459 (IVLFLSVVGLKSGGDFINTLV), 464-484 (LAWIGYGAMITGIPLLTVGIL), 493-513 (YLTLCGMLAGSMTDPPALAFA), and 530-550 (VYPLAMFLRIMSPQILAVLFW).

This sequence belongs to the AAE transporter (TC 2.A.81) family. YidE subfamily.

It localises to the cell membrane. The polypeptide is Putative transport protein YPTS_4123 (Yersinia pseudotuberculosis serotype IB (strain PB1/+)).